The primary structure comprises 243 residues: Tetraspanin-36 (243 aa).

Residues 1–9 (MDCGIITSK) lie on the Cytoplasmic side of the membrane. The helical transmembrane segment at 10 to 30 (TILLLLSLIFWAAGAALAYVG) threads the bilayer. Residues 31–49 (SYVIKSYNNFEDFMSDRHT) are Lumenal-facing. Residues 50-70 (LIPAAIIIGVAVVMFIIGFVG) traverse the membrane as a helical segment. Residues 71–84 (CCATLRESKVGLGL) lie on the Cytoplasmic side of the membrane. The helical transmembrane segment at 85–105 (FLIIIMLIFAAEVTAFVFGII) threads the bilayer. Residues 106-208 (YRGRIRGDLE…QVLQDVLSYA (103 aa)) are Lumenal-facing. N-linked (GlcNAc...) asparagine glycans are attached at residues asparagine 149, asparagine 163, and asparagine 174. A helical transmembrane segment spans residues 209 to 229 (MLVILGFAIIKFFGMLSVCVI). Topologically, residues 230-243 (TCKSKKNEYQPLYA) are cytoplasmic.

The protein belongs to the tetraspanin (TM4SF) family. In terms of processing, N-glycosylated. In terms of tissue distribution, strongly expressed in melanophores and xanthophores. Also detected in eye, brain, heart, skin, fin, testis and ovary.

It is found in the golgi apparatus membrane. The protein localises to the endoplasmic reticulum membrane. Plays a role in migration and segregation of pigment cells (melanophores and xanthophores). Contributes to pigment stripe patterning in the epidermis. This is Tetraspanin-36 from Danio rerio (Zebrafish).